The primary structure comprises 373 residues: Probable cysteine protease RD19C (373 aa).

The N-terminal stretch at 1–20 (MDRVVFFFLIAATLLAGSLG) is a signal peptide. Residues 21 to 139 (STVISGEVTD…QTAPILPTSD (119 aa)) constitute a propeptide, activation peptide. 2 disulfide bridges follow: C161–C211 and C195–C245. Residue C164 is part of the active site. N-linked (GlcNAc...) asparagine glycosylation occurs at N258. A disulfide bridge links C301 with C356. Residues H307 and N334 contribute to the active site.

This sequence belongs to the peptidase C1 family.

It is found in the lytic vacuole. Probable thiol protease. This is Probable cysteine protease RD19C from Arabidopsis thaliana (Mouse-ear cress).